We begin with the raw amino-acid sequence, 220 residues long: Fructose-6-phosphate aldolase 1 (220 aa).

Residue Lys-85 is the Schiff-base intermediate with substrate of the active site.

The protein belongs to the transaldolase family. Type 3A subfamily. As to quaternary structure, homodecamer. Five subunits are arranged as a pentamer, and two ring-like pentamers pack like a donut to form the decamer.

It is found in the cytoplasm. It catalyses the reaction beta-D-fructose 6-phosphate = dihydroxyacetone + D-glyceraldehyde 3-phosphate. With respect to regulation, inhibited by glycerol, inorganic phosphate and arabinose 5-phosphate. In terms of biological role, catalyzes the reversible formation of fructose 6-phosphate from dihydroxyacetone (DHA) and D-glyceraldehyde 3-phosphate via an aldolization reaction. Can utilize several aldehydes as acceptor compounds in vitro, and hydroxyacetone (HA) or 1-hydroxy-butan-2-one as alternative donor substrate. Is also able to catalyze the direct stereoselective self-aldol addition of glycolaldehyde to furnish D-(-)-threose, and cross-aldol reactions of glycolaldehyde to other aldehyde acceptors. Is not able to cleave fructose, fructose 1-phosphate, glucose 6-phosphate, sedoheptulose 1,7-bisphosphate, xylulose 5-phosphate, ribulose 5-phosphate, and fructose 1,6-bisphosphate; cannot use dihydroxyacetone phosphate as donor compound nor D-glyceraldehyde as acceptor. Does not display transaldolase activity. This is Fructose-6-phosphate aldolase 1 (fsaA) from Escherichia coli (strain K12).